Consider the following 490-residue polypeptide: Cis-aconitate decarboxylase (490 aa).

Belongs to the PrpD family. As to quaternary structure, homodimer.

It localises to the mitochondrion. The catalysed reaction is cis-aconitate + H(+) = itaconate + CO2. Functionally, involved in the production of itaconic acid, a soluble unsaturated dicarboxylic acid mainly produced from sugars. The sequence is that of Cis-aconitate decarboxylase (cad1) from Aspergillus terreus (strain NIH 2624 / FGSC A1156).